Here is a 100-residue protein sequence, read N- to C-terminus: Osteocalcin (100 aa).

The N-terminal stretch at 1 to 23 (MRALTLLALLALAALCITGQAGA) is a signal peptide. Positions 24–51 (KPSGADSSKGAAFVSKQEGSEVVKRPRR) are excised as a propeptide. Residues 52–98 (YLYQWLGAPVPYPDPLEPKREVCELNPDCDELADHIGFQEAYRRFYG) form the Gla domain. Ca(2+)-binding residues include Glu-68, Glu-72, Glu-75, and Asp-81. 4-carboxyglutamate is present on residues Glu-68, Glu-72, and Glu-75. A disulfide bridge connects residues Cys-74 and Cys-80.

The protein belongs to the osteocalcin/matrix Gla protein family. In terms of processing, gamma-carboxyglutamate residues are formed by vitamin K dependent carboxylation by GGCX. These residues are essential for the binding of calcium. Decarboxylation promotes the hormone activity.

It localises to the secreted. In terms of biological role, the carboxylated form is one of the main organic components of the bone matrix, which constitutes 1-2% of the total bone protein: it acts as a negative regulator of bone formation and is required to limit bone formation without impairing bone resorption or mineralization. The carboxylated form binds strongly to apatite and calcium. The uncarboxylated form acts as a hormone secreted by osteoblasts, which regulates different cellular processes, such as energy metabolism, male fertility and brain development. Regulates of energy metabolism by acting as a hormone favoring pancreatic beta-cell proliferation, insulin secretion and sensitivity and energy expenditure. Uncarboxylated osteocalcin hormone also promotes testosterone production in the testes: acts as a ligand for G protein-coupled receptor GPRC6A at the surface of Leydig cells, initiating a signaling response that promotes the expression of enzymes required for testosterone synthesis in a CREB-dependent manner. Also acts as a regulator of brain development: osteocalcin hormone crosses the blood-brain barrier and acts as a ligand for GPR158 on neurons, initiating a signaling response that prevents neuronal apoptosis in the hippocampus, favors the synthesis of all monoamine neurotransmitters and inhibits that of gamma-aminobutyric acid (GABA). Osteocalcin also crosses the placenta during pregnancy and maternal osteocalcin is required for fetal brain development. The chain is Osteocalcin from Pongo pygmaeus (Bornean orangutan).